We begin with the raw amino-acid sequence, 509 residues long: Probable cytochrome P450 4ac1 (509 aa).

Heme contacts are provided by glutamate 317 and cysteine 454.

The protein belongs to the cytochrome P450 family. Heme serves as cofactor.

It is found in the endoplasmic reticulum membrane. Its subcellular location is the microsome membrane. In terms of biological role, may be involved in the metabolism of insect hormones and in the breakdown of synthetic insecticides. This chain is Probable cytochrome P450 4ac1 (Cyp4ac1), found in Drosophila melanogaster (Fruit fly).